The primary structure comprises 500 residues: Ferulic acid decarboxylase 1 (500 aa).

Mn(2+)-binding residues include Asn168, His191, and Glu233. Residues 168-173 (NWSIAR), 190-191 (QH), and Glu233 each bind prenylated FMN. Glu282 (proton donor) is an active-site residue. Lys391 lines the prenylated FMN pocket.

It belongs to the UbiD family. UbiD-like/FDC subfamily. In terms of assembly, homodimer. May form higher order oligomers. It depends on Mn(2+) as a cofactor. Requires prenylated FMN as cofactor.

It localises to the cytoplasm. It carries out the reaction (E)-4-coumarate + H(+) = 4-vinylphenol + CO2. The enzyme catalyses (E)-cinnamate + H(+) = styrene + CO2. It catalyses the reaction (E)-ferulate + H(+) = 2-methoxy-4-vinylphenol + CO2. In terms of biological role, catalyzes the reversible decarboxylation of aromatic carboxylic acids like ferulic acid, p-coumaric acid or cinnamic acid, producing the corresponding vinyl derivatives 4-vinylphenol, 4-vinylguaiacol, and styrene, respectively, which play the role of aroma metabolites. In Aspergillus niger (strain ATCC MYA-4892 / CBS 513.88 / FGSC A1513), this protein is Ferulic acid decarboxylase 1.